A 199-amino-acid chain; its full sequence is Neurotrophic factor BDNF precursor form (199 aa).

Residues 1 to 23 (GQGSLAYPGLRTQGNLETLSGPN) form a disordered region. Residues 1–100 (GQGSLAYPGL…AANMSMRVRR (100 aa)) constitute a propeptide that is removed on maturation. The segment covering 12–23 (TQGNLETLSGPN) has biased composition (polar residues). N-linked (GlcNAc...) asparagine glycosylation is present at Asn-93. Cys-113 and Cys-180 form a disulfide bridge.

Belongs to the NGF-beta family.

The protein localises to the secreted. Its function is as follows. Promotes the survival of neuronal populations that are all located either in the central nervous system or directly connected to it. The polypeptide is Neurotrophic factor BDNF precursor form (BDNF) (Eunectes notaeus (Yellow anaconda)).